Here is a 280-residue protein sequence, read N- to C-terminus: Ribosomal protein L11 methyltransferase (280 aa).

S-adenosyl-L-methionine is bound by residues Thr130, Gly151, Asp172, and Asn213.

This sequence belongs to the methyltransferase superfamily. PrmA family.

The protein localises to the cytoplasm. It carries out the reaction L-lysyl-[protein] + 3 S-adenosyl-L-methionine = N(6),N(6),N(6)-trimethyl-L-lysyl-[protein] + 3 S-adenosyl-L-homocysteine + 3 H(+). Functionally, methylates ribosomal protein L11. This is Ribosomal protein L11 methyltransferase from Nitratiruptor sp. (strain SB155-2).